Consider the following 509-residue polypeptide: GMP synthase [glutamine-hydrolyzing] (509 aa).

In terms of domain architecture, Glutamine amidotransferase type-1 spans Lys-4 to Asp-193. The active-site Nucleophile is Cys-79. Residues His-167 and Glu-169 contribute to the active site. Residues Trp-194–Arg-384 enclose the GMPS ATP-PPase domain. Ser-221–Ser-227 provides a ligand contact to ATP.

In terms of assembly, homodimer.

It catalyses the reaction XMP + L-glutamine + ATP + H2O = GMP + L-glutamate + AMP + diphosphate + 2 H(+). It participates in purine metabolism; GMP biosynthesis; GMP from XMP (L-Gln route): step 1/1. In terms of biological role, catalyzes the synthesis of GMP from XMP. In Cytophaga hutchinsonii (strain ATCC 33406 / DSM 1761 / CIP 103989 / NBRC 15051 / NCIMB 9469 / D465), this protein is GMP synthase [glutamine-hydrolyzing].